Consider the following 218-residue polypeptide: Glutathione S-transferase Mu 7 (218 aa).

Residues 2 to 88 (PMTLGYWDIR…YLGRKHNLCG (87 aa)) enclose the GST N-terminal domain. Residues 7–8 (YW), 46–50 (WLNEK), 59–60 (NL), and 72–73 (QS) contribute to the glutathione site. Residues 90-208 (TEEERIRVDI…KSSRFLPRPL (119 aa)) enclose the GST C-terminal domain. Position 116 (Tyr116) interacts with substrate.

It belongs to the GST superfamily. Mu family. In terms of assembly, homodimer.

The protein resides in the cytoplasm. It catalyses the reaction RX + glutathione = an S-substituted glutathione + a halide anion + H(+). Its function is as follows. Conjugation of reduced glutathione to a wide number of exogenous and endogenous hydrophobic electrophiles. This is Glutathione S-transferase Mu 7 from Rattus norvegicus (Rat).